Reading from the N-terminus, the 467-residue chain is Uronate isomerase (467 aa).

It belongs to the metallo-dependent hydrolases superfamily. Uronate isomerase family.

The enzyme catalyses D-glucuronate = D-fructuronate. The catalysed reaction is aldehydo-D-galacturonate = keto-D-tagaturonate. The protein operates within carbohydrate metabolism; pentose and glucuronate interconversion. The chain is Uronate isomerase from Staphylococcus haemolyticus (strain JCSC1435).